Here is a 514-residue protein sequence, read N- to C-terminus: Peptide chain release factor 3 (514 aa).

Residues Lys-8–His-268 enclose the tr-type G domain. GTP contacts are provided by residues Ser-17 to Thr-24, Asp-85 to His-89, and Asn-139 to Asp-142.

It belongs to the TRAFAC class translation factor GTPase superfamily. Classic translation factor GTPase family. PrfC subfamily.

It is found in the cytoplasm. Increases the formation of ribosomal termination complexes and stimulates activities of RF-1 and RF-2. It binds guanine nucleotides and has strong preference for UGA stop codons. It may interact directly with the ribosome. The stimulation of RF-1 and RF-2 is significantly reduced by GTP and GDP, but not by GMP. The protein is Peptide chain release factor 3 of Streptococcus pyogenes serotype M1.